A 105-amino-acid polypeptide reads, in one-letter code: MTGTIDEFKKLVDAEEFFQFFNMSYDLEVVNVHRLHILKKFSQYMHEIDENSPDLSQEEKLNQYSLALQKAYQVFIESTAYEQKLFKVFNDKPKNVVTLTEITSD.

It belongs to the NifW family. As to quaternary structure, homotrimer; associates with NifD.

Its function is as follows. May protect the nitrogenase Fe-Mo protein from oxidative damage. This chain is Nitrogenase-stabilizing/protective protein NifW, found in Nostoc punctiforme (strain ATCC 29133 / PCC 73102).